The chain runs to 393 residues: NAD(P)H-quinone oxidoreductase subunit H, chloroplastic (393 aa).

It belongs to the complex I 49 kDa subunit family. In terms of assembly, NDH is composed of at least 16 different subunits, 5 of which are encoded in the nucleus.

The protein resides in the plastid. The protein localises to the chloroplast thylakoid membrane. It carries out the reaction a plastoquinone + NADH + (n+1) H(+)(in) = a plastoquinol + NAD(+) + n H(+)(out). The catalysed reaction is a plastoquinone + NADPH + (n+1) H(+)(in) = a plastoquinol + NADP(+) + n H(+)(out). NDH shuttles electrons from NAD(P)H:plastoquinone, via FMN and iron-sulfur (Fe-S) centers, to quinones in the photosynthetic chain and possibly in a chloroplast respiratory chain. The immediate electron acceptor for the enzyme in this species is believed to be plastoquinone. Couples the redox reaction to proton translocation, and thus conserves the redox energy in a proton gradient. The polypeptide is NAD(P)H-quinone oxidoreductase subunit H, chloroplastic (Draba nemorosa (Woodland whitlowgrass)).